Here is a 434-residue protein sequence, read N- to C-terminus: Trigger factor 2 (434 aa).

The 84-residue stretch at 164-247 folds into the PPIase FKBP-type domain; sequence GDTVTVDYDC…VKKVERIEIL (84 aa).

Belongs to the FKBP-type PPIase family. Tig subfamily.

It is found in the cytoplasm. It carries out the reaction [protein]-peptidylproline (omega=180) = [protein]-peptidylproline (omega=0). In terms of biological role, involved in protein export. Acts as a chaperone by maintaining the newly synthesized protein in an open conformation. Functions as a peptidyl-prolyl cis-trans isomerase. This Desulfitobacterium hafniense (strain Y51) protein is Trigger factor 2.